A 432-amino-acid chain; its full sequence is 3-phosphoshikimate 1-carboxyvinyltransferase (432 aa).

Residues Lys22, Ser23, and Arg27 each coordinate 3-phosphoshikimate. Lys22 lines the phosphoenolpyruvate pocket. Gly96 and Arg127 together coordinate phosphoenolpyruvate. 3-phosphoshikimate is bound by residues Ser173, Ser174, Gln175, Ser201, Asp316, Asn339, and Lys343. A phosphoenolpyruvate-binding site is contributed by Gln175. The active-site Proton acceptor is Asp316. 3 residues coordinate phosphoenolpyruvate: Arg347, Arg391, and Lys416.

Belongs to the EPSP synthase family. Monomer.

It localises to the cytoplasm. The enzyme catalyses 3-phosphoshikimate + phosphoenolpyruvate = 5-O-(1-carboxyvinyl)-3-phosphoshikimate + phosphate. Its pathway is metabolic intermediate biosynthesis; chorismate biosynthesis; chorismate from D-erythrose 4-phosphate and phosphoenolpyruvate: step 6/7. Functionally, catalyzes the transfer of the enolpyruvyl moiety of phosphoenolpyruvate (PEP) to the 5-hydroxyl of shikimate-3-phosphate (S3P) to produce enolpyruvyl shikimate-3-phosphate and inorganic phosphate. This chain is 3-phosphoshikimate 1-carboxyvinyltransferase, found in Histophilus somni (strain 2336) (Haemophilus somnus).